The primary structure comprises 157 residues: Subgroup A Rous sarcoma virus receptor pg950 (157 aa).

The first 19 residues, 1 to 19, serve as a signal peptide directing secretion; it reads MARLLPALLLLLLPGNVTG. 2 N-linked (GlcNAc...) asparagine glycosylation sites follow: Asn20 and Asn24. The Extracellular portion of the chain corresponds to 20–102; that stretch reads NGSGNGSLSR…RALPARNHGR (83 aa). The LDL-receptor class A domain maps to 28–71; that stretch reads SRCPPGQFRCSEPPGAHGECYPQDWLCDGHPDCDDGRDEWGCGT. Cystine bridges form between Cys30/Cys47, Cys37/Cys60, and Cys54/Cys69. Asn81 carries an N-linked (GlcNAc...) asparagine glycan. Residues 103-125 traverse the membrane as a helical segment; that stretch reads MWMLITAVLLCCLVAVGGIAAWG. Topologically, residues 126–157 are cytoplasmic; the sequence is KSKAKSRSDIFSLASASKELLVPDKSQADLFS.

(Microbial infection) Interacts with Rous sarcoma virus envelope protein; this interaction allows the viral attachment.

Its subcellular location is the membrane. In terms of biological role, responsible for susceptibility to the retrovirus subgroup A Rous sarcoma virus. This chain is Subgroup A Rous sarcoma virus receptor pg950, found in Coturnix japonica (Japanese quail).